The chain runs to 206 residues: Small ribosomal subunit protein uS4 (206 aa).

The 61-residue stretch at 96 to 156 (SRLDNVVYRM…EKSKKQVRIA (61 aa)) folds into the S4 RNA-binding domain.

It belongs to the universal ribosomal protein uS4 family. Part of the 30S ribosomal subunit. Contacts protein S5. The interaction surface between S4 and S5 is involved in control of translational fidelity.

Its function is as follows. One of the primary rRNA binding proteins, it binds directly to 16S rRNA where it nucleates assembly of the body of the 30S subunit. Functionally, with S5 and S12 plays an important role in translational accuracy. This chain is Small ribosomal subunit protein uS4, found in Laribacter hongkongensis (strain HLHK9).